Consider the following 922-residue polypeptide: ATP-dependent helicase fft3 (922 aa).

Disordered stretches follow at residues 139 to 177 (EPKM…APHR) and 198 to 224 (PLSS…DDSN). The segment covering 153–166 (DSLPLSLSSQSLSS) has biased composition (low complexity). Over residues 207–223 (PEADDDSNDDMYSDDDS) the composition is skewed to acidic residues. A phosphoserine mark is found at serine 213 and serine 219. The Helicase ATP-binding domain occupies 399 to 567 (YLLYELKLAG…ISLLAFILPH (169 aa)). 412 to 419 (DEMGLGKT) serves as a coordination point for ATP. Positions 518-521 (DEGH) match the DEGH box motif. Position 617 is a phosphoserine (serine 617). The Helicase C-terminal domain maps to 765 to 922 (KLKKLLTNAV…ETVEAEDDDD (158 aa)).

This sequence belongs to the SNF2/RAD54 helicase family. In terms of assembly, interacts with the GDP-bound form of spi1.

It is found in the nucleus. It localises to the chromosome. It catalyses the reaction ATP + H2O = ADP + phosphate + H(+). In terms of biological role, DNA helicase that possesses intrinsic ATP-dependent nucleosome-remodeling activity and is required for heterochromatin organization. Required for maintaining a heterochromatin chromatin structure at centromeres and subtelomeres by protecting these regions from euchromatin assembly. Enhances the nucleotide exchange activity of the pim1 guanine nucleotide exchange factor and abolishes histone-H3-mediated RanGAP inhibition. Involved in the construction of the centromeres. The sequence is that of ATP-dependent helicase fft3 (fft3) from Schizosaccharomyces pombe (strain 972 / ATCC 24843) (Fission yeast).